The primary structure comprises 116 residues: Large ribosomal subunit protein bL17 (116 aa).

The protein belongs to the bacterial ribosomal protein bL17 family. As to quaternary structure, part of the 50S ribosomal subunit. Contacts protein L32.

This is Large ribosomal subunit protein bL17 from Synechococcus sp. (strain CC9902).